We begin with the raw amino-acid sequence, 109 residues long: Large ribosomal subunit protein eL42 (109 aa).

A disordered region spans residues 23–53; it reads VSQYKKSKESTHAQGRRRYDMKQSGFGGQTK. A compositionally biased stretch (basic and acidic residues) spans 28-43; that stretch reads KSKESTHAQGRRRYDM.

Belongs to the eukaryotic ribosomal protein eL42 family.

The protein localises to the cytoplasm. This Tetrahymena thermophila (strain SB210) protein is Large ribosomal subunit protein eL42 (RPL36A).